The primary structure comprises 903 residues: Probable leucine--tRNA ligase, mitochondrial (903 aa).

Lys-68 bears the N6-acetyllysine mark. The 'HIGH' region motif lies at 92 to 102; that stretch reads YPSGKLHMGHV. The residue at position 236 (Lys-236) is an N6-acetyllysine. A 'KMSKS' region motif is present at residues 639 to 643; the sequence is KMSKS. Residue Lys-642 participates in ATP binding. Ser-711 is subject to Phosphoserine.

This sequence belongs to the class-I aminoacyl-tRNA synthetase family.

The protein resides in the mitochondrion matrix. It carries out the reaction tRNA(Leu) + L-leucine + ATP = L-leucyl-tRNA(Leu) + AMP + diphosphate. The polypeptide is Probable leucine--tRNA ligase, mitochondrial (LARS2) (Pongo abelii (Sumatran orangutan)).